The chain runs to 213 residues: RNA pyrophosphohydrolase (213 aa).

The 144-residue stretch at 6–149 (GFRPNVGIVL…KRGVYEIALT (144 aa)) folds into the Nudix hydrolase domain. A Nudix box motif is present at residues 38-59 (GGIDRGETPEQAMIRELHEEVG). Residues 185–213 (NFELPPGGSFEPNPQTSYGLDASGKPHET) are disordered.

This sequence belongs to the Nudix hydrolase family. RppH subfamily. A divalent metal cation is required as a cofactor.

Functionally, accelerates the degradation of transcripts by removing pyrophosphate from the 5'-end of triphosphorylated RNA, leading to a more labile monophosphorylated state that can stimulate subsequent ribonuclease cleavage. In Albidiferax ferrireducens (strain ATCC BAA-621 / DSM 15236 / T118) (Rhodoferax ferrireducens), this protein is RNA pyrophosphohydrolase.